Reading from the N-terminus, the 288-residue chain is Solute carrier family 25 member 45 (288 aa).

Solcar repeat units follow at residues 1–83 (MPVE…TLLA), 97–191 (PSYT…LCRQ), and 199–286 (PSSA…LLRL). Transmembrane regions (helical) follow at residues 6–26 (FVAGWISGAVGLVLGHPFDTV), 58–78 (GMSFPIASVALVNSVLFGVYS), 102–122 (IFIAGCTGGLLQAYCLAPFDL), 166–186 (GSWALVLRDTPTLGMYFVTYE), 202–222 (ATVLVAGGFAGIASWITATPF), and 266–286 (SARAFPVNAATFLSYEYLLRL).

It belongs to the mitochondrial carrier (TC 2.A.29) family. In terms of tissue distribution, widely expressed, with highest levels in testis, liver and kidney and low levels in brain, including cortex, cerebellum, hippocampus and hypothalamus, and heart.

It is found in the mitochondrion inner membrane. The sequence is that of Solute carrier family 25 member 45 (Slc25a45) from Mus musculus (Mouse).